A 192-amino-acid chain; its full sequence is dCTP deaminase, dUMP-forming (192 aa).

Residues 101-106 (KSSLGR), Asp-119, 127-129 (TLE), Gln-148, Tyr-162, and Gln-174 each bind dCTP. The Proton donor/acceptor role is filled by Glu-129. Residues 165 to 184 (GAYGNRYQGQRGPTASRSHL) form a disordered region. The span at 171 to 183 (YQGQRGPTASRSH) shows a compositional bias: polar residues.

The protein belongs to the dCTP deaminase family. Homotrimer.

It carries out the reaction dCTP + 2 H2O = dUMP + NH4(+) + diphosphate. It functions in the pathway pyrimidine metabolism; dUMP biosynthesis; dUMP from dCTP: step 1/1. In terms of biological role, bifunctional enzyme that catalyzes both the deamination of dCTP to dUTP and the hydrolysis of dUTP to dUMP without releasing the toxic dUTP intermediate. This is dCTP deaminase, dUMP-forming from Kocuria rhizophila (strain ATCC 9341 / DSM 348 / NBRC 103217 / DC2201).